The sequence spans 478 residues: D(1B) dopamine receptor (478 aa).

The Extracellular portion of the chain corresponds to 1-38; it reads MLPPGRNGTAHRARLGLQRQLAQVDAPGGSAAPLGPAQ. A glycan (N-linked (GlcNAc...) asparagine) is linked at Asn-7. Residues 39–64 traverse the membrane as a helical segment; it reads VVTAGLLTLLIVWTLLGNVLVCAAIV. The Cytoplasmic portion of the chain corresponds to 65-75; the sequence is RSRHLRAKMTN. The helical transmembrane segment at 76 to 102 threads the bilayer; that stretch reads IFIVSLAVSDLFVALLVMPWKAVAEVA. At 103 to 111 the chain is on the extracellular side; the sequence is GYWPFGAFC. Cys-111 and Cys-211 are joined by a disulfide. Residues 112–134 form a helical membrane-spanning segment; the sequence is DIWVAFDIMCSTASILNLCIISV. The Cytoplasmic portion of the chain corresponds to 135-153; sequence DRYWAISRPFRYERKMTQR. A helical transmembrane segment spans residues 154–179; the sequence is VALVMVALAWTLSILISFIPVQLNWH. At 180–215 the chain is on the extracellular side; sequence RDKAGSQGREGLLSNETPWEEGWELDGRTENCDSSL. A helical transmembrane segment spans residues 216-240; the sequence is NRTYAISSSLISFYIPVAIMIVTYT. Residues 241–289 lie on the Cytoplasmic side of the membrane; it reads RIYRIAQVQIRRISSLERAAEHAQSCRSRGACEPDPSLRASIKKETKVF. A helical membrane pass occupies residues 290-317; it reads KTLSVIMGVFVCCWLPFFILNCMVPFCS. The Extracellular portion of the chain corresponds to 318–335; sequence SGDAQGPRTGFPCVSETT. The chain crosses the membrane as a helical span at residues 336–357; that stretch reads FDIFVWFGWANSSLNPIIYAFN. Residues 358–478 lie on the Cytoplasmic side of the membrane; the sequence is ADFRKVFAQL…LTPNCFHKTA (121 aa). A lipid anchor (S-palmitoyl cysteine) is attached at Cys-370. Residues 416–446 form a disordered region; sequence GDREVGEEEEAEEEGPFDHMSQISPTTPDGD. Residues 420–430 show a composition bias toward acidic residues; that stretch reads VGEEEEAEEEG.

This sequence belongs to the G-protein coupled receptor 1 family.

The protein localises to the cell membrane. Its function is as follows. Dopamine receptor whose activity is mediated by G proteins which activate adenylyl cyclase. This chain is D(1B) dopamine receptor (Drd5), found in Mus musculus (Mouse).